Reading from the N-terminus, the 306-residue chain is tRNA dimethylallyltransferase (306 aa).

14 to 21 (GPTAAGKS) contributes to the ATP binding site. 16-21 (TAAGKS) is a binding site for substrate. Residues 39 to 42 (DSRL) are interaction with substrate tRNA.

The protein belongs to the IPP transferase family. As to quaternary structure, monomer. It depends on Mg(2+) as a cofactor.

The enzyme catalyses adenosine(37) in tRNA + dimethylallyl diphosphate = N(6)-dimethylallyladenosine(37) in tRNA + diphosphate. In terms of biological role, catalyzes the transfer of a dimethylallyl group onto the adenine at position 37 in tRNAs that read codons beginning with uridine, leading to the formation of N6-(dimethylallyl)adenosine (i(6)A). This chain is tRNA dimethylallyltransferase, found in Synechococcus sp. (strain ATCC 27144 / PCC 6301 / SAUG 1402/1) (Anacystis nidulans).